Consider the following 154-residue polypeptide: SsrA-binding protein (154 aa).

This sequence belongs to the SmpB family.

Its subcellular location is the cytoplasm. Required for rescue of stalled ribosomes mediated by trans-translation. Binds to transfer-messenger RNA (tmRNA), required for stable association of tmRNA with ribosomes. tmRNA and SmpB together mimic tRNA shape, replacing the anticodon stem-loop with SmpB. tmRNA is encoded by the ssrA gene; the 2 termini fold to resemble tRNA(Ala) and it encodes a 'tag peptide', a short internal open reading frame. During trans-translation Ala-aminoacylated tmRNA acts like a tRNA, entering the A-site of stalled ribosomes, displacing the stalled mRNA. The ribosome then switches to translate the ORF on the tmRNA; the nascent peptide is terminated with the 'tag peptide' encoded by the tmRNA and targeted for degradation. The ribosome is freed to recommence translation, which seems to be the essential function of trans-translation. The polypeptide is SsrA-binding protein (Streptococcus thermophilus (strain CNRZ 1066)).